The sequence spans 678 residues: Exoribonuclease 2 (678 aa).

One can recognise an RNB domain in the interval 193-521 (REDLTALPFV…INHRLLKAHI (329 aa)). One can recognise an S1 motif domain in the interval 568 to 650 (ETRFQAEIFD…ENRSLVGKPT (83 aa)). The interval 658–678 (SETQTSTEQPAEGAENNEPQA) is disordered.

It belongs to the RNR ribonuclease family. RNase II subfamily.

The protein localises to the cytoplasm. It catalyses the reaction Exonucleolytic cleavage in the 3'- to 5'-direction to yield nucleoside 5'-phosphates.. Its function is as follows. Involved in mRNA degradation. Hydrolyzes single-stranded polyribonucleotides processively in the 3' to 5' direction. This Vibrio cholerae serotype O1 (strain ATCC 39541 / Classical Ogawa 395 / O395) protein is Exoribonuclease 2.